We begin with the raw amino-acid sequence, 671 residues long: UvrABC system protein B (671 aa).

A Helicase ATP-binding domain is found at 25-178 (EGIKKGYKHQ…DAMLKKLVEI (154 aa)). Residue 38-45 (GVTGSGKT) coordinates ATP. Residues 91 to 114 (YYDYYQPEAYIPETDTYIEKDALI) carry the Beta-hairpin motif. Residues 435 to 601 (QVEDLLEEIH…TVKSKIKDIL (167 aa)) enclose the Helicase C-terminal domain. Residues 626-661 (EETIKKLEQEMKHAAENLEFEKAAEIRDKIFKIKEK) form the UVR domain.

The protein belongs to the UvrB family. As to quaternary structure, forms a heterotetramer with UvrA during the search for lesions. Interacts with UvrC in an incision complex.

The protein resides in the cytoplasm. The UvrABC repair system catalyzes the recognition and processing of DNA lesions. A damage recognition complex composed of 2 UvrA and 2 UvrB subunits scans DNA for abnormalities. Upon binding of the UvrA(2)B(2) complex to a putative damaged site, the DNA wraps around one UvrB monomer. DNA wrap is dependent on ATP binding by UvrB and probably causes local melting of the DNA helix, facilitating insertion of UvrB beta-hairpin between the DNA strands. Then UvrB probes one DNA strand for the presence of a lesion. If a lesion is found the UvrA subunits dissociate and the UvrB-DNA preincision complex is formed. This complex is subsequently bound by UvrC and the second UvrB is released. If no lesion is found, the DNA wraps around the other UvrB subunit that will check the other stand for damage. This is UvrABC system protein B from Thermodesulfovibrio yellowstonii (strain ATCC 51303 / DSM 11347 / YP87).